Here is a 247-residue protein sequence, read N- to C-terminus: Fasciclin-like arabinogalactan protein 13 (247 aa).

The N-terminal stretch at 1-25 (MATTPLLLLLLTAVFLSTEITAQRA) is a signal peptide. In terms of domain architecture, FAS1 spans 34 to 179 (PINITAILEK…LAVYVVDMVL (146 aa)). N-linked (GlcNAc...) asparagine glycans are attached at residues Asn-36, Asn-55, Asn-68, Asn-141, and Asn-150. Positions 189 to 228 (KISPMAPPPKSKSPDVSDDSESSKKAAAPSESEKSGSGEM) are disordered. Residue Gly-224 is the site of GPI-anchor amidated glycine attachment. Residues 225–247 (SGEMNTGLGLGLGLVVLCLKFLL) constitute a propeptide, removed in mature form.

The protein belongs to the fasciclin-like AGP family.

Its subcellular location is the cell membrane. Functionally, may be a cell surface adhesion protein. The polypeptide is Fasciclin-like arabinogalactan protein 13 (FLA13) (Arabidopsis thaliana (Mouse-ear cress)).